The primary structure comprises 296 residues: 1,2-beta-oligomannan phosphorylase (296 aa).

The protein belongs to the glycosyl hydrolase 130 family. As to quaternary structure, homodimer.

It catalyses the reaction [(1-&gt;2)-beta-D-mannosyl](n) + phosphate = [(1-&gt;2)-beta-D-mannosyl](n-1) + alpha-D-mannose 1-phosphate. Its pathway is nucleotide-sugar biosynthesis; GDP-alpha-D-mannose biosynthesis. Functionally, probably involved in a salvage pathway for GDP-D-mannose biosynthesis. Catalyzes the reversible phosphorolysis of 1,2-beta-oligomannan. In phosphorolytic reactions, prefers 1,2-beta-oligomannan with a degree of polymerization (DP) of 3, 4 and 5. Produces alpha-D-mannose 1-phosphate, which is the precursor of GDP-D-mannose. This is 1,2-beta-oligomannan phosphorylase from Thermoanaerobacter sp. (strain X514).